A 103-amino-acid polypeptide reads, in one-letter code: Large ribosomal subunit protein uL24 (103 aa).

The protein belongs to the universal ribosomal protein uL24 family. In terms of assembly, part of the 50S ribosomal subunit.

One of two assembly initiator proteins, it binds directly to the 5'-end of the 23S rRNA, where it nucleates assembly of the 50S subunit. In terms of biological role, one of the proteins that surrounds the polypeptide exit tunnel on the outside of the subunit. The sequence is that of Large ribosomal subunit protein uL24 from Brucella ovis (strain ATCC 25840 / 63/290 / NCTC 10512).